Reading from the N-terminus, the 372-residue chain is Putative glutamate--cysteine ligase 2 (372 aa).

This sequence belongs to the glutamate--cysteine ligase type 2 family. YbdK subfamily.

The enzyme catalyses L-cysteine + L-glutamate + ATP = gamma-L-glutamyl-L-cysteine + ADP + phosphate + H(+). Functionally, ATP-dependent carboxylate-amine ligase which exhibits weak glutamate--cysteine ligase activity. This chain is Putative glutamate--cysteine ligase 2, found in Cupriavidus metallidurans (strain ATCC 43123 / DSM 2839 / NBRC 102507 / CH34) (Ralstonia metallidurans).